Reading from the N-terminus, the 333-residue chain is tRNA N6-adenosine threonylcarbamoyltransferase (333 aa).

Fe cation contacts are provided by histidine 111 and histidine 115. Substrate-binding positions include 134 to 138 (LVSGG), aspartate 167, glycine 180, and asparagine 272. Aspartate 300 is a binding site for Fe cation.

It belongs to the KAE1 / TsaD family. Fe(2+) serves as cofactor.

It localises to the cytoplasm. The enzyme catalyses L-threonylcarbamoyladenylate + adenosine(37) in tRNA = N(6)-L-threonylcarbamoyladenosine(37) in tRNA + AMP + H(+). In terms of biological role, required for the formation of a threonylcarbamoyl group on adenosine at position 37 (t(6)A37) in tRNAs that read codons beginning with adenine. Is involved in the transfer of the threonylcarbamoyl moiety of threonylcarbamoyl-AMP (TC-AMP) to the N6 group of A37, together with TsaE and TsaB. TsaD likely plays a direct catalytic role in this reaction. The polypeptide is tRNA N6-adenosine threonylcarbamoyltransferase (Hamiltonella defensa subsp. Acyrthosiphon pisum (strain 5AT)).